Here is a 120-residue protein sequence, read N- to C-terminus: Ribosome-binding factor A (120 aa).

This sequence belongs to the RbfA family. In terms of assembly, monomer. Binds 30S ribosomal subunits, but not 50S ribosomal subunits or 70S ribosomes.

It is found in the cytoplasm. Functionally, one of several proteins that assist in the late maturation steps of the functional core of the 30S ribosomal subunit. Associates with free 30S ribosomal subunits (but not with 30S subunits that are part of 70S ribosomes or polysomes). Required for efficient processing of 16S rRNA. May interact with the 5'-terminal helix region of 16S rRNA. The sequence is that of Ribosome-binding factor A from Clostridium botulinum (strain 657 / Type Ba4).